Reading from the N-terminus, the 894-residue chain is Nitrate reductase [NADPH] (894 aa).

The interval 1–79 (MAVKSQLGVT…PEDLKTPDHR (79 aa)) is disordered. A compositionally biased stretch (polar residues) spans 7–16 (LGVTYTTKTF). Positions 69–79 (LPEDLKTPDHR) are enriched in basic and acidic residues. Cysteine 169 contacts Mo-molybdopterin. One can recognise a Cytochrome b5 heme-binding domain in the interval 535–610 (VRIISLEELK…MPQYHIGTLN (76 aa)). Histidine 570 and histidine 593 together coordinate heme. One can recognise an FAD-binding FR-type domain in the interval 638 to 749 (KYWSKAILET…KGPVGKFEYL (112 aa)). Residues 692–695 (RAYT), 709–713 (LIKIY), 723–725 (KMT), serine 773, and threonine 776 contribute to the FAD site.

It belongs to the nitrate reductase family. Homodimer. The cofactor is FAD. Heme is required as a cofactor. It depends on Mo-molybdopterin as a cofactor.

The enzyme catalyses nitrite + NADP(+) + H2O = nitrate + NADPH + H(+). Its function is as follows. Nitrate reductase is a key enzyme involved in the first step of nitrate assimilation in plants, fungi and bacteria. This chain is Nitrate reductase [NADPH] (NIA), found in Beauveria bassiana (White muscardine disease fungus).